The following is a 173-amino-acid chain: NADH-ubiquinone oxidoreductase chain 6 (173 aa).

The next 5 membrane-spanning stretches (helical) occupy residues 1-21 (MTYF…AVAS), 27-47 (YGVV…LSLG), 48-68 (VSFV…VVFV), 87-107 (VVGY…VGGF), and 139-159 (CGVG…FVVL).

The protein belongs to the complex I subunit 6 family.

The protein localises to the mitochondrion membrane. It catalyses the reaction a ubiquinone + NADH + 5 H(+)(in) = a ubiquinol + NAD(+) + 4 H(+)(out). Core subunit of the mitochondrial membrane respiratory chain NADH dehydrogenase (Complex I) that is believed to belong to the minimal assembly required for catalysis. Complex I functions in the transfer of electrons from NADH to the respiratory chain. The immediate electron acceptor for the enzyme is believed to be ubiquinone. This Ptychoramphus aleuticus (Cassin's auklet) protein is NADH-ubiquinone oxidoreductase chain 6 (MT-ND6).